Reading from the N-terminus, the 71-residue chain is Protein Tlp homolog (71 aa).

Positions Glu-30 to Ile-56 are disordered. Over residues Arg-39 to Ile-56 the composition is skewed to basic and acidic residues.

The protein belongs to the Tlp family.

This is Protein Tlp homolog from Desulforamulus reducens (strain ATCC BAA-1160 / DSM 100696 / MI-1) (Desulfotomaculum reducens).